The following is a 529-amino-acid chain: Cytokinin dehydrogenase 4 (529 aa).

The N-terminal stretch at 1-27 is a signal peptide; that stretch reads MRGAMKPSIVHCLKLLMLLALGGVTMH. One can recognise an FAD-binding PCMH-type domain in the interval 63–244; that stretch reads CSLLPAAVLH…TRARIALEPA (182 aa). 3 residues coordinate FAD: Ala-99, Gly-101, and Gly-103. Position 104 is a pros-8alpha-FAD histidine (His-104). Positions 105, 109, 168, 173, 179, 183, and 234 each coordinate FAD. N-linked (GlcNAc...) asparagine glycosylation is found at Asn-285, Asn-419, and Asn-425. Tyr-479 and Gln-517 together coordinate FAD.

This sequence belongs to the oxygen-dependent FAD-linked oxidoreductase family. As to quaternary structure, monomer. FAD serves as cofactor. As to expression, expressed in inflorescence meristems.

The protein resides in the secreted. It is found in the extracellular space. It catalyses the reaction N(6)-dimethylallyladenine + A + H2O = 3-methyl-2-butenal + adenine + AH2. Functionally, catalyzes the oxidation of cytokinins, a family of N(6)-substituted adenine derivatives that are plant hormones, where the substituent is an isopentenyl group. The polypeptide is Cytokinin dehydrogenase 4 (CKX4) (Oryza sativa subsp. japonica (Rice)).